The chain runs to 147 residues: Bis(5'-nucleosyl)-tetraphosphatase [asymmetrical] (147 aa).

One can recognise a Nudix hydrolase domain in the interval 1–139 (MALRACGLII…EMKAALQEGH (139 aa)). Alanine 2 is modified (N-acetylalanine). The Nudix box motif lies at 43 to 64 (GHVEPGEDDLETALRETQEEAG).

It belongs to the Nudix hydrolase family. It depends on a divalent metal cation as a cofactor.

It carries out the reaction P(1),P(4)-bis(5'-guanosyl) tetraphosphate + H2O = GMP + GTP + 2 H(+). The catalysed reaction is a 5'-end CoA-ribonucleoside in mRNA + H2O = a 5'-end phospho-adenosine-phospho-ribonucleoside in mRNA + (R)-4'-phosphopantetheine + 2 H(+). The enzyme catalyses a 5'-end FAD-phospho-ribonucleoside in mRNA + H2O = a 5'-end phospho-adenosine-phospho-ribonucleoside in mRNA + FMN + 2 H(+). Its function is as follows. Catalyzes the asymmetric hydrolysis of diadenosine 5',5'''-P1,P4-tetraphosphate (Ap4A) to yield AMP and ATP. Exhibits decapping activity towards FAD-capped RNAs and dpCoA-capped RNAs in vitro. This Homo sapiens (Human) protein is Bis(5'-nucleosyl)-tetraphosphatase [asymmetrical] (NUDT2).